A 395-amino-acid polypeptide reads, in one-letter code: L-rhamnonate dehydratase (395 aa).

Residues His23 and Arg49 each coordinate substrate. Mg(2+) is bound by residues Asp215, Glu241, and Glu269. Catalysis depends on His319, which acts as the Proton acceptor. Position 339 (Glu339) interacts with substrate.

This sequence belongs to the mandelate racemase/muconate lactonizing enzyme family. RhamD subfamily. In terms of assembly, homooctamer; tetramer of dimers. It depends on Mg(2+) as a cofactor.

The catalysed reaction is L-rhamnonate = 2-dehydro-3-deoxy-L-rhamnonate + H2O. In terms of biological role, catalyzes the dehydration of L-rhamnonate to 2-keto-3-deoxy-L-rhamnonate (KDR). In Polaromonas sp. (strain JS666 / ATCC BAA-500), this protein is L-rhamnonate dehydratase (rhmD).